The chain runs to 529 residues: E3 ubiquitin-protein ligase arih1 (529 aa).

Disordered regions lie at residues 1–29 and 46–69; these read MDSDEGYNYEFDDEEECSEESGADEHEDE and ERAGLCGEGGGSALGPGPGGEEDE. The segment covering 51–64 has biased composition (gly residues); that stretch reads CGEGGGSALGPGPG. The tract at residues 77–125 is UBA-like; it reads TAEQILQHMVECIREVNEVIQNPATITRILLSHFNWDKEKLMERYFDGN. The tract at residues 154–365 is TRIAD supradomain; it reads LDMPCQICYL…SAWYNCNRYN (212 aa). Residues Cys-158, Cys-161, Cys-175, His-177, Cys-180, Cys-183, Cys-203, Cys-208, Cys-248, Cys-253, Cys-269, Cys-271, Cys-276, Cys-279, His-284, Cys-289, Cys-316, and Cys-319 each contribute to the Zn(2+) site. The RING-type 1 zinc finger occupies 158-208; it reads CQICYLNYPNSYFTGLECGHKFCMQCWGEYLTTKIIEEGMGQTISCPAHGC. Residues 228-289 form an IBR-type zinc finger; that stretch reads LKYQHLITNS…GENWHDPVKC (62 aa). Residues 316–347 form an RING-type 2; atypical zinc finger; sequence CPKCHVTIEKDGGCNHMVCRNQNCKAEFCWVC. Cys-329 is a catalytic residue. Zn(2+)-binding residues include Cys-334, Cys-339, Cys-344, Cys-347, His-354, and Cys-361. Positions 380–529 are ariadne domain; sequence RAALQRYLFY…EKDLWEYIED (150 aa).

It belongs to the RBR family. Ariadne subfamily. As to quaternary structure, interacts (via the first RING-type zinc finger) with ube2l3. Associates with cullin-RING ubiquitin ligase (CRL) complexes containing neddylated cullin.

The protein localises to the cytoplasm. It localises to the nucleus. It catalyses the reaction [E2 ubiquitin-conjugating enzyme]-S-ubiquitinyl-L-cysteine + [acceptor protein]-L-lysine = [E2 ubiquitin-conjugating enzyme]-L-cysteine + [acceptor protein]-N(6)-ubiquitinyl-L-lysine.. It functions in the pathway protein modification; protein ubiquitination. Its activity is regulated as follows. Autoinhibited by the ariadne domain, which masks the second RING-type zinc finger that contains the active site and inhibits the E3 activity. Inhibition is relieved upon binding to neddylated cullin-RING ubiquitin ligase complexes, which activate the E3 ligase activity of ARIH1. E3 ubiquitin-protein ligase, which catalyzes ubiquitination of target proteins together with ubiquitin-conjugating enzyme E2 ube2l3. Acts as an atypical E3 ubiquitin-protein ligase by working together with cullin-RING ubiquitin ligase (CRL) complexes and initiating ubiquitination of CRL substrates: associates with CRL complexes and specifically mediates addition of the first ubiquitin on CRLs targets. The initial ubiquitin is then elongated. E3 ubiquitin-protein ligase activity is activated upon binding to neddylated cullin-RING ubiquitin ligase complexes. In Xenopus laevis (African clawed frog), this protein is E3 ubiquitin-protein ligase arih1 (arih1).